Here is a 494-residue protein sequence, read N- to C-terminus: GDP-fucose protein O-fucosyltransferase 4 (494 aa).

Residues 1-7 are Cytoplasmic-facing; sequence MAARYTE. The helical; Signal-anchor for type II membrane protein transmembrane segment at 8-24 threads the bilayer; it reads AVLAALGVLSVCSASSS. The Lumenal portion of the chain corresponds to 25–494; sequence SGSGASGKAG…EIFMKRNKNL (470 aa). N167 is a glycosylation site (N-linked (GlcNAc...) asparagine). Residues C390 and C393 are joined by a disulfide bond.

This sequence belongs to the glycosyltransferase 10 family.

Its subcellular location is the endoplasmic reticulum membrane. The catalysed reaction is L-threonyl-[protein] + GDP-beta-L-fucose = 3-O-(alpha-L-fucosyl)-L-threonyl-[protein] + GDP + H(+). It carries out the reaction L-seryl-[protein] + GDP-beta-L-fucose = 3-O-(alpha-L-fucosyl)-L-seryl-[protein] + GDP + H(+). It participates in protein modification; protein glycosylation. Its function is as follows. Protein O-fucosyltransferase that specifically catalyzes O-fucosylation of serine or threonine residues in EMI domains of target proteins, such as MMRN1, MMRN2 and EMID1. Attaches fucose through an O-glycosidic linkage. O-fucosylation of EMI domain-containing proteins may be required for facilitating protein folding and secretion. Also shows minor alpha-(1,3)-fucosyltransferase activity toward activity toward biantennary N-glycan acceptors. However, this was tested with a library of synthetic substrates and this activity is unsure in vivo. The protein is GDP-fucose protein O-fucosyltransferase 4 (Fut11) of Rattus norvegicus (Rat).